Consider the following 815-residue polypeptide: MINLKLFLELKLCFLITLLCSSHISSVSDTFFINCGSPTNVTVNNRTFVSDNNLVQGFSVGTTDSNSGDESTLFQTARVFSDESSSTYRFPIEEHGWFLIRIYFLPLVSASQDLTTARFSVSAQNFTLIREYKPSTTSVVREYILNVTTDSLLLQFLPRTGSVSFINALEVLRLPETLIPEDAKLIGTQKDLKLSSHAMETVSRVNMGNLSVSRDQDKLWRQWDSDSAYKAHFGTPVMNLKAVNFSAGGITDDIAPVYVYGTATRLNSDLDPNTNANLTWTFKVEPGFDYFVRFHFCNIIVDPFGFERQIRFDIFVNSEKVRTIDMTEVLNGTFGAPFFVDAVMRKAKSREGFLNLSIGLVMDVSSYPVSFINGFEISKLSNDKRSLDAFDAILPDGSSSNKSSNTSVGLIAGLSAALCVALVFGVVVSWWCIRKRRRRNRQMQTVHSRGDDHQIKKNETGESLIFSSSKIGYRYPLALIKEATDDFDESLVIGVGGFGKVYKGVLRDKTEVAVKRGAPQSRQGLAEFKTEVEMLTQFRHRHLVSLIGYCDENSEMIIVYEYMEKGTLKDHLYDLDDKPRLSWRQRLEICVGAARGLHYLHTGSTRAIIHRDVKSANILLDDNFMAKVADFGLSKTGPDLDQTHVSTAVKGSFGYLDPEYLTRQQLTEKSDVYSFGVVMLEVVCGRPVIDPSLPREKVNLIEWAMKLVKKGKLEDIIDPFLVGKVKLEEVKKYCEVTEKCLSQNGIERPAMGDLLWNLEFMLQVQAKDEKAAMVDDKPEASVVGSTMQFSVNGVGDIAGVSMSKVFAQMVREETR.

A signal peptide spans Met1–Ser26. Residues Val27–Ser407 are Extracellular-facing. 11 N-linked (GlcNAc...) asparagine glycosylation sites follow: Asn40, Asn45, Asn125, Asn146, Asn209, Asn244, Asn277, Asn331, Asn355, Asn401, and Asn405. A helical membrane pass occupies residues Val408–Val428. Residues Ser429–Arg815 are Cytoplasmic-facing. One can recognise a Protein kinase domain in the interval Phe487–Met761. ATP contacts are provided by residues Ile493–Val501 and Lys515. Residue Asp612 is the Proton acceptor of the active site.

Belongs to the protein kinase superfamily. Ser/Thr protein kinase family.

It localises to the cell membrane. The chain is Probable receptor-like protein kinase At2g39360 from Arabidopsis thaliana (Mouse-ear cress).